The chain runs to 460 residues: Nuclear transport factor 2 (460 aa).

Residues 15 to 131 (VGRAFVEQYY…YFVLNDVFRF (117 aa)) form the NTF2 domain. Disordered stretches follow at residues 207–226 (EPPT…GDAP), 238–289 (KSSP…VDVE), and 361–460 (RQAV…GGSS). In terms of domain architecture, RRM spans 293-370 (HSIYVRNLPF…RQAVVEEKKT (78 aa)). Positions 373 to 382 (RGGGNNGGSR) are enriched in gly residues. The segment covering 383 to 394 (GRYFSGRGSFRN) has biased composition (low complexity). Gly residues-rich tracts occupy residues 399-416 (GGRG…GGEF) and 450-460 (GRGGARGGGSS).

As to quaternary structure, interacts with MBD6.

It localises to the cytoplasm. It is found in the nucleus. Involved in RNA-directed DNA methylation (RdDM). The protein is Nuclear transport factor 2 of Arabidopsis thaliana (Mouse-ear cress).